Consider the following 174-residue polypeptide: Repair DNA polymerase X (174 aa).

An involved in ssDNA binding region spans residues 42–51; the sequence is REEKMLNDVD. Mg(2+) contacts are provided by D49 and D51. C81 and C86 are oxidised to a cystine. D100 provides a ligand contact to Mg(2+).

This sequence belongs to the DNA polymerase type-X family. Requires Mg(2+) as cofactor.

The protein resides in the virion. It catalyses the reaction DNA(n) + a 2'-deoxyribonucleoside 5'-triphosphate = DNA(n+1) + diphosphate. Functionally, error-prone polymerase lacking a proofreading 3'-5' exonuclease which catalyzes the gap-filling reaction during the DNA repair process. Specifically binds intermediates in the single-nucleotide base-excision repair process. Also catalyzes DNA polymerization with low nucleotide-insertion fidelity. Probably acts as a strategic DNA mutase, which gives rise to a rapid emergence of variants. Generates mismatched G-G pairs, in that case, the polymerase first binds the deoxynucleotide followed by mismatch formation. Together with the viral DNA ligase, fills the single nucleotide gaps generated by the AP endonuclease. Binds DNA with high affinity via the helix alphaE. The protein is Repair DNA polymerase X of Ornithodoros (relapsing fever ticks).